Reading from the N-terminus, the 370-residue chain is Aminomethyltransferase (370 aa).

This sequence belongs to the GcvT family. The glycine cleavage system is composed of four proteins: P, T, L and H.

It carries out the reaction N(6)-[(R)-S(8)-aminomethyldihydrolipoyl]-L-lysyl-[protein] + (6S)-5,6,7,8-tetrahydrofolate = N(6)-[(R)-dihydrolipoyl]-L-lysyl-[protein] + (6R)-5,10-methylene-5,6,7,8-tetrahydrofolate + NH4(+). Its function is as follows. The glycine cleavage system catalyzes the degradation of glycine. This chain is Aminomethyltransferase, found in Clostridium botulinum (strain Kyoto / Type A2).